The primary structure comprises 500 residues: ATP synthase subunit alpha, sodium ion specific (500 aa).

ATP is bound at residue Gly169–Thr176.

It belongs to the ATPase alpha/beta chains family. In terms of assembly, F-type ATPases have 2 components, CF(1) - the catalytic core - and CF(0) - the membrane proton channel. CF(1) has five subunits: alpha(3), beta(3), gamma(1), delta(1), epsilon(1). CF(0) has three main subunits: a, b and c.

The protein resides in the cell membrane. It catalyses the reaction 4 Na(+)(in) + ATP + H2O = 4 Na(+)(out) + ADP + phosphate + H(+). In terms of biological role, produces ATP from ADP in the presence of a sodium ion gradient across the membrane. The alpha chain is a regulatory subunit. The chain is ATP synthase subunit alpha, sodium ion specific from Propionigenium modestum.